The chain runs to 405 residues: Diaminopimelate decarboxylase (405 aa).

Lysine 46 is modified (N6-(pyridoxal phosphate)lysine). Residues glycine 225 and glutamate 259 to arginine 262 each bind pyridoxal 5'-phosphate. The substrate site is built by arginine 262, arginine 298, and tyrosine 302. Catalysis depends on cysteine 329, which acts as the Proton donor. Residues glutamate 330 and tyrosine 358 each coordinate substrate. Residue tyrosine 358 coordinates pyridoxal 5'-phosphate.

The protein belongs to the Orn/Lys/Arg decarboxylase class-II family. LysA subfamily. As to quaternary structure, homodimer. Pyridoxal 5'-phosphate serves as cofactor.

It catalyses the reaction meso-2,6-diaminopimelate + H(+) = L-lysine + CO2. It participates in amino-acid biosynthesis; L-lysine biosynthesis via DAP pathway; L-lysine from DL-2,6-diaminopimelate: step 1/1. Its function is as follows. Specifically catalyzes the decarboxylation of meso-diaminopimelate (meso-DAP) to L-lysine. This is Diaminopimelate decarboxylase from Helicobacter pylori (strain ATCC 700392 / 26695) (Campylobacter pylori).